A 542-amino-acid polypeptide reads, in one-letter code: Nibrin homolog (542 aa).

One can recognise an FHA domain in the interval 25–90 (YKVGRKGCDI…YGTFVKTDLG (66 aa)). Residues 119-195 (IYRLSLIPLV…KTIILTNWVM (77 aa)) enclose the BRCT domain. Residues 409-430 (SRGHMDEKNSSDSVTIRRDRND) form a disordered region. The interval 465–500 (VDFKRFRKGNVTCGNSFSSLIPFAKDPYKEYDSWDV) is involved in MRE11-binding.

The protein belongs to the Nibrin family. In terms of assembly, component of the MRN complex composed of two heterodimers RAD50 and MRE11 associated with a single NBS1.

It is found in the nucleus. The protein localises to the chromosome. Functionally, component of the MRN complex, which plays a central role in double-strand break (DSB) repair, DNA recombination, maintenance of telomere integrity and meiosis. The MRN complex is involved in the repair of DNA double-strand breaks (DSBs) via homologous recombination (HR), an error-free mechanism which primarily occurs during S and G2 phases. The complex (1) mediates the end resection of damaged DNA, which generates proper single-stranded DNA, a key initial steps in HR, and is (2) required for the recruitment of other repair factors and efficient activation of ATM and ATR upon DNA damage. The MRN complex possesses single-strand endonuclease activity and double-strand-specific 3'-5' exonuclease activity, which are provided by MRE11, to initiate end resection, which is required for single-strand invasion and recombination. Within the MRN complex, NBS1 acts as a protein-protein adapter, which specifically recognizes and binds phosphorylated proteins, promoting their recruitment to DNA damage sites. Recruits MRE11 and RAD50 components of the MRN complex to DSBs in response to DNA damage. This is Nibrin homolog from Arabidopsis thaliana (Mouse-ear cress).